A 355-amino-acid polypeptide reads, in one-letter code: S-adenosylmethionine:tRNA ribosyltransferase-isomerase (355 aa).

The protein belongs to the QueA family. Monomer.

Its subcellular location is the cytoplasm. The catalysed reaction is 7-aminomethyl-7-carbaguanosine(34) in tRNA + S-adenosyl-L-methionine = epoxyqueuosine(34) in tRNA + adenine + L-methionine + 2 H(+). The protein operates within tRNA modification; tRNA-queuosine biosynthesis. Its function is as follows. Transfers and isomerizes the ribose moiety from AdoMet to the 7-aminomethyl group of 7-deazaguanine (preQ1-tRNA) to give epoxyqueuosine (oQ-tRNA). This Burkholderia orbicola (strain MC0-3) protein is S-adenosylmethionine:tRNA ribosyltransferase-isomerase.